The chain runs to 215 residues: Chaperone protein TorD (215 aa).

The protein belongs to the TorD/DmsD family. TorD subfamily.

It is found in the cytoplasm. Functionally, involved in the biogenesis of TorA. Acts on TorA before the insertion of the molybdenum cofactor and, as a result, probably favors a conformation of the apoenzyme that is competent for acquiring the cofactor. The polypeptide is Chaperone protein TorD (Aliivibrio fischeri (strain ATCC 700601 / ES114) (Vibrio fischeri)).